Reading from the N-terminus, the 90-residue chain is Probable Fe(2+)-trafficking protein (90 aa).

Belongs to the Fe(2+)-trafficking protein family.

Functionally, could be a mediator in iron transactions between iron acquisition and iron-requiring processes, such as synthesis and/or repair of Fe-S clusters in biosynthetic enzymes. This Aeromonas hydrophila subsp. hydrophila (strain ATCC 7966 / DSM 30187 / BCRC 13018 / CCUG 14551 / JCM 1027 / KCTC 2358 / NCIMB 9240 / NCTC 8049) protein is Probable Fe(2+)-trafficking protein.